The sequence spans 449 residues: Cysteine--tRNA ligase (449 aa).

A Zn(2+)-binding site is contributed by Cys30. Positions 32 to 42 match the 'HIGH' region motif; that stretch reads PTVYDRAHLGN. 3 residues coordinate Zn(2+): Cys210, His235, and Glu239. The short motif at 268–272 is the 'KMSKS' region element; it reads KMSKS. Lys271 contributes to the ATP binding site.

Belongs to the class-I aminoacyl-tRNA synthetase family. As to quaternary structure, monomer. Zn(2+) serves as cofactor.

It localises to the cytoplasm. It catalyses the reaction tRNA(Cys) + L-cysteine + ATP = L-cysteinyl-tRNA(Cys) + AMP + diphosphate. This chain is Cysteine--tRNA ligase, found in Acidiphilium cryptum (strain JF-5).